Reading from the N-terminus, the 420-residue chain is Dihydrolipoyllysine-residue succinyltransferase component of 2-oxoglutarate dehydrogenase complex (420 aa).

Residues 1 to 76 (MAEVKVPELA…EVGQAVAVVG (76 aa)) form the Lipoyl-binding domain. N6-lipoyllysine is present on Lys42. The interval 75 to 199 (VGEGQVNTSN…IREKMSRRKK (125 aa)) is disordered. The span at 81–90 (NTSNDSSNES) shows a compositional bias: polar residues. The span at 91-102 (SQKDEAKEKETP) shows a compositional bias: basic and acidic residues. The segment covering 103-127 (KQSNPNSSESENTQDNSQQRINATP) has biased composition (polar residues). The 37-residue stretch at 124–160 (NATPSARRHARKNGVDLSEVSGKGNDVLRKDDVENSQ) folds into the Peripheral subunit-binding (PSBD) domain. Residues 149-158 (DVLRKDDVEN) show a composition bias toward basic and acidic residues. Positions 159 to 174 (SQKSSSQTAKSESKSQ) are enriched in low complexity. The span at 175-186 (NSGSKQTNNNPS) shows a compositional bias: polar residues. Active-site residues include His391 and Asp395.

It belongs to the 2-oxoacid dehydrogenase family. As to quaternary structure, forms a 24-polypeptide structural core with octahedral symmetry. Part of the 2-oxoglutarate dehydrogenase (OGDH) complex composed of E1 (2-oxoglutarate dehydrogenase), E2 (dihydrolipoamide succinyltransferase) and E3 (dihydrolipoamide dehydrogenase); the complex contains multiple copies of the three enzymatic components (E1, E2 and E3). The cofactor is (R)-lipoate.

It catalyses the reaction N(6)-[(R)-dihydrolipoyl]-L-lysyl-[protein] + succinyl-CoA = N(6)-[(R)-S(8)-succinyldihydrolipoyl]-L-lysyl-[protein] + CoA. Its pathway is amino-acid degradation; L-lysine degradation via saccharopine pathway; glutaryl-CoA from L-lysine: step 6/6. Functionally, E2 component of the 2-oxoglutarate dehydrogenase (OGDH) complex which catalyzes the second step in the conversion of 2-oxoglutarate to succinyl-CoA and CO(2). In Staphylococcus epidermidis (strain ATCC 35984 / DSM 28319 / BCRC 17069 / CCUG 31568 / BM 3577 / RP62A), this protein is Dihydrolipoyllysine-residue succinyltransferase component of 2-oxoglutarate dehydrogenase complex (odhB).